Reading from the N-terminus, the 269-residue chain is Bis(5'-nucleosyl)-tetraphosphatase, symmetrical (269 aa).

Belongs to the Ap4A hydrolase family.

It catalyses the reaction P(1),P(4)-bis(5'-adenosyl) tetraphosphate + H2O = 2 ADP + 2 H(+). Functionally, hydrolyzes diadenosine 5',5'''-P1,P4-tetraphosphate to yield ADP. The protein is Bis(5'-nucleosyl)-tetraphosphatase, symmetrical of Vibrio cholerae serotype O1 (strain ATCC 39541 / Classical Ogawa 395 / O395).